The following is an 803-amino-acid chain: MLQNVTPHSKLPGEGNAGLLGLGPEAAAPGKRIRKPSLLYEGFESPTMASVPALQLTPANPPPPEVSNPKKPGRVTNQLQYLHKVVMKALWKHQFAWPFRQPVDAVKLGLPDYHKIIKQPMDMGTIKRRLENNYYWAASECMQDFNTMFTNCYIYNKPTDDIVLMAQTLEKIFLQKVASMPQEEQELVVTIPKNSHKKGAKLAALQGSITSAHQVPAVSSVSHTALYTPPPEIPTTVLNIPHPSVISSPLLKSLHSAGPQLLAVSAAPPAQPLAKKKGVKRKADTTTPTPTAILAPGSPASPPGSLEAKAARLPPMRRESGRPIKPPRKDLPDSQQQHQSSKKGKLSEQLKHCNGILKELLSKKHAAYAWPFYKPVDASALGLHDYHDIIKHPMDLSTVKRKMENRDYRDAQEFAADVRLMFSNCYKYNPPDHDVVAMARKLQDVFEFRYAKMPDEPLEPGPLPVSTALPPGLAKSSSESSSEESSSESSSEEDEEEDEEEEEEEEESESSDSEEERAHRLAELQEQLRAVHEQLAALSQGPISKPKRKREKKEKKKKRKAEKHRGRAGVDEDDKGSRAPRPSQPKKSKKASGSGGGSAATLGPPGFGPSGGSGTKLPKKATKTAPPALPTGYDSEEEEESRPMSYDEKRQLSLDINKLPGEKLGRVVHIIQAREPSLRDSNPEEIEIDFETLKPSTLRELERYVLSCLRKKPRKPYTIKKPVGKTKEELALEKKRELEKRLQDVSGQLNSTKKPPKKASEKTESSSTQQVAVSRLSASSSSSDSSSSSSSSSSSDTSDSDSG.

Methionine 1 bears the N-acetylmethionine mark. The segment at 1–28 (MLQNVTPHSKLPGEGNAGLLGLGPEAAA) is disordered. Threonine 6 carries the post-translational modification Phosphothreonine. At serine 37 the chain carries Phosphoserine. The disordered stretch occupies residues 53-73 (ALQLTPANPPPPEVSNPKKPG). One can recognise a Bromo 1 domain in the interval 74-180 (RVTNQLQYLH…KIFLQKVASM (107 aa)). A protein is bound by residues aspartate 112, tyrosine 155, asparagine 156, lysine 157, aspartate 160, and aspartate 161. 3 disordered regions span residues 268–349 (PPAQ…LSEQ), 456–653 (EPLE…RQLS), and 739–803 (EKRL…SDSG). Positions 285-298 (TTTPTPTAILAPGS) are enriched in low complexity. A phosphoserine mark is found at serine 298, serine 301, and serine 305. Basic and acidic residues predominate over residues 316–332 (MRRESGRPIKPPRKDLP). A Bromo 2 domain is found at 344 to 453 (GKLSEQLKHC…DVFEFRYAKM (110 aa)). Acidic residues predominate over residues 481–515 (SSEESSSESSSEEDEEEDEEEEEEEEESESSDSEE). Over residues 545 to 567 (KPKRKREKKEKKKKRKAEKHRGR) the composition is skewed to basic residues. Positions 556-560 (KKKRK) match the Nuclear localization signal motif. An NET domain is found at 634–716 (DSEEEEESRP…SCLRKKPRKP (83 aa)). Serine 635 is subject to Phosphoserine. Positions 641–652 (SRPMSYDEKRQL) are enriched in basic and acidic residues. The segment covering 777–797 (SASSSSSDSSSSSSSSSSSDT) has biased composition (low complexity).

Belongs to the BET family. Homodimer. Interacts with E2F1. Interacts with (acetylated) STAT3; promoting STAT3 recruitment to chromatin. Interacts with CTCF; promoting BRD2 recruitment to chromatin.

The protein localises to the nucleus. It localises to the chromosome. Functionally, chromatin reader protein that specifically recognizes and binds histone H4 acetylated at 'Lys-5' and 'Lys-12' (H4K5ac and H4K12ac, respectively), thereby controlling gene expression and remodeling chromatin structures. Recruits transcription factors and coactivators to target gene sites, and activates RNA polymerase II machinery for transcriptional elongation. Plays a key role in genome compartmentalization via its association with CTCF and cohesin: recruited to chromatin by CTCF and promotes formation of topologically associating domains (TADs) via its ability to bind acetylated histones, contributing to CTCF boundary formation and enhancer insulation. Also recognizes and binds acetylated non-histone proteins, such as STAT3. Involved in inflammatory response by regulating differentiation of naive CD4(+) T-cells into T-helper Th17: recognizes and binds STAT3 acetylated at 'Lys-87', promoting STAT3 recruitment to chromatin. In addition to acetylated lysines, also recognizes and binds lysine residues on histones that are both methylated and acetylated on the same side chain to form N6-acetyl-N6-methyllysine (Kacme), an epigenetic mark of active chromatin associated with increased transcriptional initiation. Specifically binds histone H4 acetyl-methylated at 'Lys-5' and 'Lys-12' (H4K5acme and H4K12acme, respectively). In Canis lupus familiaris (Dog), this protein is Bromodomain-containing protein 2 (BRD2).